The chain runs to 130 residues: Small ribosomal subunit protein uS9 (130 aa).

The protein belongs to the universal ribosomal protein uS9 family.

In Hydrogenovibrio crunogenus (strain DSM 25203 / XCL-2) (Thiomicrospira crunogena), this protein is Small ribosomal subunit protein uS9.